Here is a 199-residue protein sequence, read N- to C-terminus: MTKVLVLYYSAYGHIEAMANAVAEGAREAGVTVDIKRVPELVPAEVAKASYYKVDQAAPIAKIEDLTNYDAIIVGTGTRFGRMGSQMANFLDQAGGLWAKGALHGKVGGAFTSSATQHGGQETTLFSIITNLLHFGMVVVGMNYGFAGQMKLDEVTGGAPYGATTITGGDGSRQPSANELAGARYQGRQIAETARKLHG.

Residues 4–190 form the Flavodoxin-like domain; that stretch reads VLVLYYSAYG…AGARYQGRQI (187 aa). FMN is bound by residues 10–15 and 78–80; these read SAYGHI and TRF. An NAD(+)-binding site is contributed by Tyr-12. Position 98 (Trp-98) interacts with substrate. Residues 113–119 and His-134 each bind FMN; that span reads SSATQHG.

This sequence belongs to the WrbA family. Requires FMN as cofactor.

It carries out the reaction a quinone + NADH + H(+) = a quinol + NAD(+). It catalyses the reaction a quinone + NADPH + H(+) = a quinol + NADP(+). In Bradyrhizobium diazoefficiens (strain JCM 10833 / BCRC 13528 / IAM 13628 / NBRC 14792 / USDA 110), this protein is NAD(P)H dehydrogenase (quinone).